The primary structure comprises 621 residues: 1-deoxy-D-xylulose-5-phosphate synthase (621 aa).

Residues H80 and 121–123 (GHS) contribute to the thiamine diphosphate site. D152 contacts Mg(2+). Residues 153-154 (GA), N181, Y288, and E370 each bind thiamine diphosphate. Residue N181 coordinates Mg(2+).

It belongs to the transketolase family. DXPS subfamily. As to quaternary structure, homodimer. It depends on Mg(2+) as a cofactor. Thiamine diphosphate is required as a cofactor.

It catalyses the reaction D-glyceraldehyde 3-phosphate + pyruvate + H(+) = 1-deoxy-D-xylulose 5-phosphate + CO2. It functions in the pathway metabolic intermediate biosynthesis; 1-deoxy-D-xylulose 5-phosphate biosynthesis; 1-deoxy-D-xylulose 5-phosphate from D-glyceraldehyde 3-phosphate and pyruvate: step 1/1. In terms of biological role, catalyzes the acyloin condensation reaction between C atoms 2 and 3 of pyruvate and glyceraldehyde 3-phosphate to yield 1-deoxy-D-xylulose-5-phosphate (DXP). This Edwardsiella ictaluri (strain 93-146) protein is 1-deoxy-D-xylulose-5-phosphate synthase.